We begin with the raw amino-acid sequence, 1231 residues long: uncharacterized protein (1231 aa).

Disordered stretches follow at residues 171–197 (LKPD…QHDD), 210–259 (DESF…HLPT), and 389–547 (ASPR…RSSR). Positions 440-450 (RSRHSHKRRSI) are enriched in basic residues. Phosphoserine is present on residues Ser-449, Ser-451, Ser-453, and Ser-455. A compositionally biased stretch (basic residues) spans 458–502 (RGGRRAVRRSRSRSPRRSYNRGSTRSRSRSMRHRSRSPAHYRGRG). The span at 503–541 (RGREPASKERGSSSRDFGGRHSLQRERERSSEYYHRNEG) shows a compositional bias: basic and acidic residues. Position 549 is a phosphotyrosine (Tyr-549). Disordered stretches follow at residues 570–591 (KTSS…ASEP), 950–981 (PNLD…DDEE), and 1058–1203 (TLSK…PPFN). Ser-573 and Ser-589 each carry phosphoserine. The residue at position 970 (Thr-970) is a Phosphothreonine. Ser-972 bears the Phosphoserine mark. Polar residues predominate over residues 1076–1103 (YMMNQQHGAPNAQNAPNLGQNPGQNLGQ). Positions 1118–1127 (QQQQQQQQQQ) are enriched in low complexity. A compositionally biased stretch (pro residues) spans 1178-1203 (PPGPGGYVGPPPNPWASNVPPQPPFN).

This is an uncharacterized protein from Drosophila melanogaster (Fruit fly).